A 535-amino-acid chain; its full sequence is Secreted lipase 5 (535 aa).

Residues 1–17 (MHLKSLLLAALPLLLEA) form the signal peptide. Residues Asn32 and Asn119 are each glycosylated (N-linked (GlcNAc...) asparagine). Ser241 serves as the catalytic Acyl-ester intermediate. Residues Asn282, Asn341, Asn347, and Asn432 are each glycosylated (N-linked (GlcNAc...) asparagine).

Belongs to the type-B carboxylesterase/lipase family.

The protein localises to the secreted. It carries out the reaction a carboxylic ester + H2O = an alcohol + a carboxylate + H(+). Functionally, secreted lipase involved in plant virulence. Has a substrate preference for p-nitrophenyl esters with a carbon chain length of C8 (p-nitrophenyl caprylate). The chain is Secreted lipase 5 from Gibberella zeae (strain ATCC MYA-4620 / CBS 123657 / FGSC 9075 / NRRL 31084 / PH-1) (Wheat head blight fungus).